Consider the following 361-residue polypeptide: Phospho-N-acetylmuramoyl-pentapeptide-transferase (361 aa).

Helical transmembrane passes span 25–45, 72–92, 95–115, 135–155, 169–189, 200–220, 240–260, 264–284, 289–309, and 338–358; these read TGGA…WIID, TPTM…VLWA, LNPY…VGFY, LLIE…LGRA, VMLN…VGAG, GLAI…SYLA, LAVL…FNAP, IFMG…IAVA, IVLA…IVQV, and QIVI…LSTL.

This sequence belongs to the glycosyltransferase 4 family. MraY subfamily. It depends on Mg(2+) as a cofactor.

It is found in the cell inner membrane. The catalysed reaction is UDP-N-acetyl-alpha-D-muramoyl-L-alanyl-gamma-D-glutamyl-meso-2,6-diaminopimeloyl-D-alanyl-D-alanine + di-trans,octa-cis-undecaprenyl phosphate = di-trans,octa-cis-undecaprenyl diphospho-N-acetyl-alpha-D-muramoyl-L-alanyl-D-glutamyl-meso-2,6-diaminopimeloyl-D-alanyl-D-alanine + UMP. It participates in cell wall biogenesis; peptidoglycan biosynthesis. In terms of biological role, catalyzes the initial step of the lipid cycle reactions in the biosynthesis of the cell wall peptidoglycan: transfers peptidoglycan precursor phospho-MurNAc-pentapeptide from UDP-MurNAc-pentapeptide onto the lipid carrier undecaprenyl phosphate, yielding undecaprenyl-pyrophosphoryl-MurNAc-pentapeptide, known as lipid I. The protein is Phospho-N-acetylmuramoyl-pentapeptide-transferase of Rhodopseudomonas palustris (strain TIE-1).